The primary structure comprises 355 residues: Protein RecA (355 aa).

Residue 67-74 (GPESSGKT) coordinates ATP.

The protein belongs to the RecA family.

It is found in the cytoplasm. Functionally, can catalyze the hydrolysis of ATP in the presence of single-stranded DNA, the ATP-dependent uptake of single-stranded DNA by duplex DNA, and the ATP-dependent hybridization of homologous single-stranded DNAs. It interacts with LexA causing its activation and leading to its autocatalytic cleavage. This chain is Protein RecA, found in Shewanella halifaxensis (strain HAW-EB4).